A 442-amino-acid polypeptide reads, in one-letter code: Signal recognition particle 54 kDa protein (442 aa).

GTP is bound by residues 106-113 (GLQGSGKT), 186-190 (DTAGR), and 244-247 (TKLD).

It belongs to the GTP-binding SRP family. SRP54 subfamily. Part of the signal recognition particle protein translocation system, which is composed of SRP and FtsY. Archaeal SRP consists of a 7S RNA molecule of 300 nucleotides and two protein subunits: SRP54 and SRP19.

It is found in the cytoplasm. It catalyses the reaction GTP + H2O = GDP + phosphate + H(+). Its function is as follows. Involved in targeting and insertion of nascent membrane proteins into the cytoplasmic membrane. Binds to the hydrophobic signal sequence of the ribosome-nascent chain (RNC) as it emerges from the ribosomes. The SRP-RNC complex is then targeted to the cytoplasmic membrane where it interacts with the SRP receptor FtsY. This is Signal recognition particle 54 kDa protein from Methanothermobacter thermautotrophicus (strain ATCC 29096 / DSM 1053 / JCM 10044 / NBRC 100330 / Delta H) (Methanobacterium thermoautotrophicum).